The following is a 396-amino-acid chain: Cytochrome b (396 aa).

Transmembrane regions (helical) follow at residues 32–52, 76–98, 113–133, and 179–199; these read FGSL…TLAM, WLLR…LHIG, LWSI…IGYV, and FFSL…MHLL. His-82 and His-96 together coordinate heme b. Heme b-binding residues include His-183 and His-197. Residue His-202 coordinates a ubiquinone. 4 helical membrane passes run 225–245, 289–309, 321–341, and 348–368; these read FTSK…IFVF, LGGV…ALIH, LLNL…WVGA, and YILI…ILMI.

Belongs to the cytochrome b family. As to quaternary structure, fungal cytochrome b-c1 complex contains 10 subunits; 3 respiratory subunits, 2 core proteins and 5 low-molecular weight proteins. Cytochrome b-c1 complex is a homodimer. Heme b is required as a cofactor.

It localises to the mitochondrion inner membrane. Functionally, component of the ubiquinol-cytochrome c reductase complex (complex III or cytochrome b-c1 complex) that is part of the mitochondrial respiratory chain. The b-c1 complex mediates electron transfer from ubiquinol to cytochrome c. Contributes to the generation of a proton gradient across the mitochondrial membrane that is then used for ATP synthesis. The chain is Cytochrome b (cob) from Spizellomyces punctatus.